Consider the following 204-residue polypeptide: U1 small nuclear ribonucleoprotein C (204 aa).

The Matrin-type zinc finger occupies 4 to 36 (FFCDYCDVYLTHDSMSVRKAHNSGRNHLRNVVD). The segment at 65-204 (ANPMLPQNQP…GAGAPGHEKR (140 aa)) is disordered. Pro residues-rich tracts occupy residues 77–154 (GFPP…PGAP) and 166–192 (APPP…PGFA).

Belongs to the U1 small nuclear ribonucleoprotein C family. U1 snRNP is composed of the 7 core Sm proteins B/B', D1, D2, D3, E, F and G that assemble in a heptameric protein ring on the Sm site of the small nuclear RNA to form the core snRNP, and at least 3 U1 snRNP-specific proteins U1-70K, U1-A and U1-C. U1-C interacts with U1 snRNA and the 5' splice-site region of the pre-mRNA.

It localises to the nucleus. In terms of biological role, component of the spliceosomal U1 snRNP, which is essential for recognition of the pre-mRNA 5' splice-site and the subsequent assembly of the spliceosome. U1-C is directly involved in initial 5' splice-site recognition for both constitutive and regulated alternative splicing. The interaction with the 5' splice-site seems to precede base-pairing between the pre-mRNA and the U1 snRNA. Stimulates commitment or early (E) complex formation by stabilizing the base pairing of the 5' end of the U1 snRNA and the 5' splice-site region. The polypeptide is U1 small nuclear ribonucleoprotein C (Fusarium vanettenii (strain ATCC MYA-4622 / CBS 123669 / FGSC 9596 / NRRL 45880 / 77-13-4) (Fusarium solani subsp. pisi)).